A 725-amino-acid polypeptide reads, in one-letter code: MGALRWLSIAATASTALALNPEGLISAPRRSEAIPNPSGDVAVFSQSQYSFKTHKTTSQWNVLDLKSGDIKLLTNDSDVSEIVWLGSDDSTVLYVNGTNADIPGGVELWVSDISDFANGYKAASLPASFSGFKVVTTDSGDVRYVAYAESWANGTAYNEELVAKPLSSARIYDSIYVRHWDYYLTTRFNAVFSGTLKKSEGKGKATYKADGDLKNLVSPVKNAESPYPPFGGASDYDLSPDGKWVAFKSKAHDIPRANYTTAYIFLVPHDGSKTAVPINGPDSPGTPEGVKGDAGSPVFSPDSKKIAYWQMADESYEADHRTLYVYTVGSEETIPSLAADWDRSLDSVKWADDDNLIIGVEDAGRSRLFSIPADAGDDYKPKNFTDGGVVSAYYQLPDSTYLVTSTAIWTSWNVYIASPEKGVIKTLATANKIDPELKGLGPEIVDEFYYEGNWTKIQAFVIYPENFDKSKSYPLLYYIHGGPQSSWLDSWSTRWNPKVFADQGYVVVAPNPTGSSGFGDALQDAIQNQWGGYPYEDLVKGWEYVNENFDFIDTDNGVAAGASYGGFMINWIQGSDLGRKFKALVSHDGTFVADAKVSTEELWFMQHEFNGTFWDNRENYRRWDPSAPERILKFSTPMLIIHSDLDYRLPVSEGLSLFNILQERGVPSRFLNFPDENHWVQNKENSLVWHQQVLGWLNKYSGVEESNEDAVSLDDTVIPVVDYNP.

A signal peptide spans 1 to 18 (MGALRWLSIAATASTALA). N75, N96, N153, N258, N383, and N453 each carry an N-linked (GlcNAc...) asparagine glycan. The Charge relay system role is filled by S563. A glycan (N-linked (GlcNAc...) asparagine) is linked at N610. Residues D646 and H678 each act as charge relay system in the active site.

This sequence belongs to the peptidase S9C family.

The protein localises to the secreted. Functionally, extracellular dipeptidyl-peptidase which removes N-terminal dipeptides sequentially from polypeptides having unsubstituted N-termini. In Aspergillus flavus (strain ATCC 200026 / FGSC A1120 / IAM 13836 / NRRL 3357 / JCM 12722 / SRRC 167), this protein is Probable dipeptidyl-peptidase 5 (dpp5).